We begin with the raw amino-acid sequence, 73 residues long: Conotoxin ArMKLT2-022 (73 aa).

The signal sequence occupies residues 1-22 (MKLTCVLIIAVLFLTACQLTTG). Positions 23 to 40 (EQKDHAQRSADRNSKLTR) are excised as a propeptide. At glutamine 41 the chain carries Pyrrolidone carboxylic acid. Cystine bridges form between cysteine 42–cysteine 56, cysteine 49–cysteine 60, and cysteine 55–cysteine 67.

It belongs to the conotoxin O1 superfamily. Expressed by the venom duct.

It localises to the secreted. In Conus arenatus (Sand-dusted cone), this protein is Conotoxin ArMKLT2-022.